The primary structure comprises 657 residues: tRNA uridine 5-carboxymethylaminomethyl modification enzyme MnmG (657 aa).

Residue Gly-13–Gly-18 coordinates FAD. Gly-281–Phe-295 serves as a coordination point for NAD(+).

This sequence belongs to the MnmG family. In terms of assembly, homodimer. Heterotetramer of two MnmE and two MnmG subunits. FAD is required as a cofactor.

It is found in the cytoplasm. In terms of biological role, NAD-binding protein involved in the addition of a carboxymethylaminomethyl (cmnm) group at the wobble position (U34) of certain tRNAs, forming tRNA-cmnm(5)s(2)U34. This is tRNA uridine 5-carboxymethylaminomethyl modification enzyme MnmG from Acidovorax ebreus (strain TPSY) (Diaphorobacter sp. (strain TPSY)).